The chain runs to 183 residues: 2-hydroxy-1,4-benzoquinone reductase (183 aa).

Residues serine 11 to asparagine 18, glutamate 77 to arginine 80, and serine 113 contribute to the FMN site.

It belongs to the SsuE family. In terms of assembly, homotetramer. Requires FMN as cofactor.

It catalyses the reaction 2-hydroxy-1,4-benzoquinone + NADH + 2 H(+) = benzene-1,2,4-triol + NAD(+). Involved in the metabolism of 4-aminophenol. Catalyzes the reduction of the auto-oxidation product 2-hydroxy-1,4-benzoquinone back to hydroxyquinol. Has a broad substrate specificity toward benzoquinones, converting them to the corresponding 1,4-benzenediols. In Burkholderia sp, this protein is 2-hydroxy-1,4-benzoquinone reductase.